A 318-amino-acid polypeptide reads, in one-letter code: Magnetosome protein MamM (318 aa).

The transmembrane domain (TMD) stretch occupies residues 1-210 (MRKSGCTVCS…FMDAYRGLMD (210 aa)). A run of 4 helical transmembrane segments spans residues 13-33 (IGWV…FVGL), 39-59 (AMLA…MVVI), 81-101 (FILS…LLVH), and 117-137 (LIVL…YFYS). The segment at 211–318 (HTAGEAVQNR…DEVMLSKVDN (108 aa)) is C-terminal domain (CTD). Fe cation is bound by residues Asp-249, His-264, His-285, and Glu-289.

The protein belongs to the cation diffusion facilitator (CDF) transporter (TC 2.A.4) family. As to quaternary structure, forms homodimers via its C-terminal domain (CTD) in the presence of metal cations. Interacts with MamB via their CTD.

It localises to the magnetosome membrane. Its subcellular location is the cell inner membrane. In terms of biological role, probably plays a role in biomineralization. Required for stable accumulation of MamB. Probably binds and transports iron. May nucleate iron crystal formation. This Paramagnetospirillum magneticum (strain ATCC 700264 / AMB-1) (Magnetospirillum magneticum) protein is Magnetosome protein MamM (mamM).